The primary structure comprises 123 residues: NADH-quinone oxidoreductase subunit A (123 aa).

A run of 3 helical transmembrane segments spans residues tyrosine 11–leucine 31, leucine 68–isoleucine 88, and isoleucine 93–isoleucine 113.

The protein belongs to the complex I subunit 3 family. As to quaternary structure, NDH-1 is composed of 14 different subunits. Subunits NuoA, H, J, K, L, M, N constitute the membrane sector of the complex.

The protein resides in the cell inner membrane. The enzyme catalyses a quinone + NADH + 5 H(+)(in) = a quinol + NAD(+) + 4 H(+)(out). NDH-1 shuttles electrons from NADH, via FMN and iron-sulfur (Fe-S) centers, to quinones in the respiratory chain. The immediate electron acceptor for the enzyme in this species is believed to be ubiquinone. Couples the redox reaction to proton translocation (for every two electrons transferred, four hydrogen ions are translocated across the cytoplasmic membrane), and thus conserves the redox energy in a proton gradient. The sequence is that of NADH-quinone oxidoreductase subunit A from Rickettsia typhi (strain ATCC VR-144 / Wilmington).